A 709-amino-acid chain; its full sequence is MSKTFAEIAEAFLEPEAVRIAKEAVEEYGDHERKIIQIGIHFQVCCMFCDEYLSTNGSDRFVLIEGRKRGTAVSLQNELCKSYDLEPLPFLCDIFDREEKQFVEIGITRKADDSYFQSKFGKLGNSCKIFVFSYDGRLDKNCEGPMEEQKLRIFSFLATAADFLRKENMFNEIFLPDNEETIIEMKKGKTFLELRDESVPLPFQTYEQMKDYCEKFKGNPRELASKVSQMQSNIKLPIKHYEQNKFRQIRLPKGPMAPYTHKFLMEEAWMFTKISDPERSRAGEILIDFFKKGNLSAIRPKDKPLQGKYPIHYKNLWNQIKAAIADRTMVINENDHSEFLGGIGRASKKIPEISLTQDVITTEGLKQSENKLPEPRSFPRWFNAEWMWAIKDSDLTGWVPMAEYPPADNELEDYAEHLNKTMEGVLQGTNCAREMGKCILTVGALMTECRLFPGKIKVVPIYARSKERKSMQEGLPVPSEMDCLFGICVKSKSHLNKDDGMYTIITFEFSIREPNLEKHQKYTVFEAGHTTVRMKKGESVIGREVPLYLYCRTTALSKIKNDWLSKARRCFITTMDTVETICLRESAKAEENLVEKTLNEKQMWIGKKNGELIAQPLREALRVQLVQQFYFCIYNDSQLEGFCNEQKKILMALEGDKKNKSSFGFNPEGLLEKIEECLINNPMCLFMAQRLNELVIEASKRGAKFFKTD.

Mn(2+) is bound by residues His41, Glu65, Asp93, Glu104, and Ile105. Positions 109–124 (RKADDSYFQSKFGKLG) match the Nuclear localization signal 1 (NLS1) motif. The Nuclear localization signal 2 (NLS2) motif lies at 166–228 (KENMFNEIFL…NPRELASKVS (63 aa)).

Belongs to the influenza viruses PA family. Influenza RNA polymerase is composed of three subunits: PB1, PB2 and PA. Interacts (via C-terminus) with PB1 (via N-terminus). The cofactor is Mn(2+). Phosphorylated on serines and threonines by host kinases, including human casein kinase II.

The protein localises to the host cytoplasm. It is found in the host nucleus. Functionally, plays an essential role in viral RNA transcription and replication by forming the heterotrimeric polymerase complex together with PB1 and PB2 subunits. The complex transcribes viral mRNAs by using a unique mechanism called cap-snatching. It consists in the hijacking and cleavage of host capped pre-mRNAs. These short capped RNAs are then used as primers for viral mRNAs. The PB2 subunit is responsible for the binding of the 5' cap of cellular pre-mRNAs which are subsequently cleaved after 10-13 nucleotides by the PA subunit that carries the endonuclease activity. The polypeptide is Polymerase acidic protein (Homo sapiens (Human)).